The chain runs to 253 residues: 3-deoxy-manno-octulosonate cytidylyltransferase (253 aa).

It belongs to the KdsB family.

The protein resides in the cytoplasm. It carries out the reaction 3-deoxy-alpha-D-manno-oct-2-ulosonate + CTP = CMP-3-deoxy-beta-D-manno-octulosonate + diphosphate. It participates in nucleotide-sugar biosynthesis; CMP-3-deoxy-D-manno-octulosonate biosynthesis; CMP-3-deoxy-D-manno-octulosonate from 3-deoxy-D-manno-octulosonate and CTP: step 1/1. It functions in the pathway bacterial outer membrane biogenesis; lipopolysaccharide biosynthesis. Activates KDO (a required 8-carbon sugar) for incorporation into bacterial lipopolysaccharide in Gram-negative bacteria. This chain is 3-deoxy-manno-octulosonate cytidylyltransferase, found in Neisseria meningitidis serogroup A / serotype 4A (strain DSM 15465 / Z2491).